The primary structure comprises 450 residues: Glucose-6-phosphate isomerase (450 aa).

Glu-291 acts as the Proton donor in catalysis. Residues His-312 and Lys-426 contribute to the active site.

It belongs to the GPI family.

The protein resides in the cytoplasm. The catalysed reaction is alpha-D-glucose 6-phosphate = beta-D-fructose 6-phosphate. Its pathway is carbohydrate biosynthesis; gluconeogenesis. The protein operates within carbohydrate degradation; glycolysis; D-glyceraldehyde 3-phosphate and glycerone phosphate from D-glucose: step 2/4. In terms of biological role, catalyzes the reversible isomerization of glucose-6-phosphate to fructose-6-phosphate. This Clostridium novyi (strain NT) protein is Glucose-6-phosphate isomerase.